A 341-amino-acid polypeptide reads, in one-letter code: Methionine import ATP-binding protein MetN (341 aa).

In terms of domain architecture, ABC transporter spans 9-247 (ISVEQLNKEI…PQSAITEELF (239 aa)). Position 41–48 (41–48 (GHSGSGKS)) interacts with ATP.

It belongs to the ABC transporter superfamily. Methionine importer (TC 3.A.1.24) family. As to quaternary structure, the complex is composed of two ATP-binding proteins (MetN), two transmembrane proteins (MetI) and a solute-binding protein (MetQ).

It is found in the cell inner membrane. The enzyme catalyses L-methionine(out) + ATP + H2O = L-methionine(in) + ADP + phosphate + H(+). It catalyses the reaction D-methionine(out) + ATP + H2O = D-methionine(in) + ADP + phosphate + H(+). Functionally, part of the ABC transporter complex MetNIQ involved in methionine import. Responsible for energy coupling to the transport system. The sequence is that of Methionine import ATP-binding protein MetN from Chlamydia abortus (strain DSM 27085 / S26/3) (Chlamydophila abortus).